A 156-amino-acid polypeptide reads, in one-letter code: ATP synthase subunit b', chloroplastic (156 aa).

Residues 20–42 form a helical membrane-spanning segment; sequence NGTLPLMALQFLTLMVLLNTIFY.

The protein belongs to the ATPase B chain family. F-type ATPases have 2 components, F(1) - the catalytic core - and F(0) - the membrane proton channel. F(1) has five subunits: alpha(3), beta(3), gamma(1), delta(1), epsilon(1). F(0) has four main subunits: a(1), b(1), b'(1) and c(10-14). The alpha and beta chains form an alternating ring which encloses part of the gamma chain. F(1) is attached to F(0) by a central stalk formed by the gamma and epsilon chains, while a peripheral stalk is formed by the delta, b and b' chains.

Its subcellular location is the plastid. The protein resides in the chloroplast thylakoid membrane. Functionally, f(1)F(0) ATP synthase produces ATP from ADP in the presence of a proton or sodium gradient. F-type ATPases consist of two structural domains, F(1) containing the extramembraneous catalytic core and F(0) containing the membrane proton channel, linked together by a central stalk and a peripheral stalk. During catalysis, ATP synthesis in the catalytic domain of F(1) is coupled via a rotary mechanism of the central stalk subunits to proton translocation. Its function is as follows. Component of the F(0) channel, it forms part of the peripheral stalk, linking F(1) to F(0). The b'-subunit is a diverged and duplicated form of b found in plants and photosynthetic bacteria. In Pyropia yezoensis (Susabi-nori), this protein is ATP synthase subunit b', chloroplastic.